A 97-amino-acid chain; its full sequence is Putative pterin-4-alpha-carbinolamine dehydratase (97 aa).

The protein belongs to the pterin-4-alpha-carbinolamine dehydratase family.

The enzyme catalyses (4aS,6R)-4a-hydroxy-L-erythro-5,6,7,8-tetrahydrobiopterin = (6R)-L-erythro-6,7-dihydrobiopterin + H2O. The sequence is that of Putative pterin-4-alpha-carbinolamine dehydratase from Saccharolobus solfataricus (strain ATCC 35092 / DSM 1617 / JCM 11322 / P2) (Sulfolobus solfataricus).